The chain runs to 126 residues: Aspartate 1-decarboxylase (126 aa).

S25 serves as the catalytic Schiff-base intermediate with substrate; via pyruvic acid. S25 is subject to Pyruvic acid (Ser). A substrate-binding site is contributed by T57. Residue Y58 is the Proton donor of the active site. 73 to 75 (GAA) provides a ligand contact to substrate.

This sequence belongs to the PanD family. Heterooctamer of four alpha and four beta subunits. Pyruvate is required as a cofactor. Post-translationally, is synthesized initially as an inactive proenzyme, which is activated by self-cleavage at a specific serine bond to produce a beta-subunit with a hydroxyl group at its C-terminus and an alpha-subunit with a pyruvoyl group at its N-terminus.

The protein localises to the cytoplasm. The catalysed reaction is L-aspartate + H(+) = beta-alanine + CO2. It participates in cofactor biosynthesis; (R)-pantothenate biosynthesis; beta-alanine from L-aspartate: step 1/1. Functionally, catalyzes the pyruvoyl-dependent decarboxylation of aspartate to produce beta-alanine. The sequence is that of Aspartate 1-decarboxylase from Escherichia coli O6:K15:H31 (strain 536 / UPEC).